The chain runs to 121 residues: Immunoglobulin kappa variable 2-40 (121 aa).

Positions 1–19 are cleaved as a signal peptide; it reads MRLPAQLLGLLMLWVPGSS. The 102-residue stretch at 20-121 folds into the Ig-like domain; it reads EDIVMTQTPL…YYCMQRIEFP (102 aa). The tract at residues 21–43 is framework-1; sequence DIVMTQTPLSLPVTPGEPASISC. Cysteine 43 and cysteine 114 are disulfide-bonded. Residues 44–60 are complementarity-determining-1; the sequence is RSSQSLLDSDDGNTYLD. The interval 61-75 is framework-2; the sequence is WYLQKPGQSPQLLIY. The interval 76-82 is complementarity-determining-2; that stretch reads TLSYRAS. Positions 83–114 are framework-3; that stretch reads GVPDRFSGSGSGTDFTLKISRVEAEDVGVYYC. A complementarity-determining-3 region spans residues 115-121; it reads MQRIEFP.

Immunoglobulins are composed of two identical heavy chains and two identical light chains; disulfide-linked.

Its subcellular location is the secreted. It is found in the cell membrane. Its function is as follows. V region of the variable domain of immunoglobulin light chains that participates in the antigen recognition. Immunoglobulins, also known as antibodies, are membrane-bound or secreted glycoproteins produced by B lymphocytes. In the recognition phase of humoral immunity, the membrane-bound immunoglobulins serve as receptors which, upon binding of a specific antigen, trigger the clonal expansion and differentiation of B lymphocytes into immunoglobulins-secreting plasma cells. Secreted immunoglobulins mediate the effector phase of humoral immunity, which results in the elimination of bound antigens. The antigen binding site is formed by the variable domain of one heavy chain, together with that of its associated light chain. Thus, each immunoglobulin has two antigen binding sites with remarkable affinity for a particular antigen. The variable domains are assembled by a process called V-(D)-J rearrangement and can then be subjected to somatic hypermutations which, after exposure to antigen and selection, allow affinity maturation for a particular antigen. The sequence is that of Immunoglobulin kappa variable 2-40 from Homo sapiens (Human).